Here is a 741-residue protein sequence, read N- to C-terminus: Isocitrate dehydrogenase [NADP] (741 aa).

NADP(+) contacts are provided by Asn85 and Ser87. D-threo-isocitrate is bound by residues Ser132, Asn135, Arg139, Arg145, and Lys255. Asn135 lines the NADP(+) pocket. Position 350 (Asp350) interacts with Mn(2+). The D-threo-isocitrate site is built by Tyr420 and Arg547. Asp548 lines the Mn(2+) pocket. Positions 585, 589, 600, 602, and 649 each coordinate NADP(+).

This sequence belongs to the monomeric-type IDH family. In terms of assembly, monomer. It depends on Mg(2+) as a cofactor. The cofactor is Mn(2+).

It is found in the cytoplasm. The catalysed reaction is D-threo-isocitrate + NADP(+) = 2-oxoglutarate + CO2 + NADPH. Activity is inhibited in the presence of Ca(2+). Functionally, catalyzes the oxidative decarboxylation of isocitrate to 2-oxoglutarate and carbon dioxide with the concomitant reduction of NADP(+). This is Isocitrate dehydrogenase [NADP] from Azotobacter vinelandii.